The primary structure comprises 525 residues: Potassium voltage-gated channel subfamily A member 3 (525 aa).

The segment at 1–23 is disordered; that stretch reads MTVVPGDHLLEPEAAGGGGGDPP. Residues 1–184 are Cytoplasmic-facing; it reads MTVVPGDHLL…EYPESSGPAR (184 aa). Residues 185–203 traverse the membrane as a helical segment; sequence GIAIVSVLVILISIVIFCL. Residues 204–244 lie on the Extracellular side of the membrane; that stretch reads ETLPEFRDEKDYPASPSQDVFEAANNSTSGASSGASSFSDP. The N-linked (GlcNAc...) asparagine glycan is linked to asparagine 229. Residues 245-266 form a helical membrane-spanning segment; that stretch reads FFVVETLCIIWFSFELLVRFFA. The S-palmitoyl cysteine moiety is linked to residue cysteine 267. Over 267–277 the chain is Cytoplasmic; that stretch reads CPSKATFSRNI. A helical membrane pass occupies residues 278 to 298; it reads MNLIDIVAIIPYFITLGTELA. The Extracellular portion of the chain corresponds to 299–312; that stretch reads ERQGNGQQAMSLAI. Residues 313–331 form a helical; Voltage-sensor membrane-spanning segment; the sequence is LRVIRLVRVFRIFKLSRHS. Residues 332 to 347 lie on the Cytoplasmic side of the membrane; sequence KGLQILGQTLKASMRE. The helical transmembrane segment at 348-367 threads the bilayer; sequence LGLLIFFLFIGVILFSSAVY. The Extracellular segment spans residues 368–408; that stretch reads FAEADDPSSGFNSIPDAFWWAVVTMTTVGYGDMHPVTIGGK. A Selectivity filter motif is present at residues 394–399; that stretch reads TVGYGD. Residues 409-431 traverse the membrane as a helical segment; sequence IVGSLCAIAGVLTIALPVPVIVS. The Cytoplasmic portion of the chain corresponds to 432–525; the sequence is NFNYFYHRET…VNIKKIFTDV (94 aa). An interaction with KCNE4 region spans residues 432–525; the sequence is NFNYFYHRET…VNIKKIFTDV (94 aa). Phosphotyrosine is present on tyrosine 449. Position 470 is a phosphoserine; by PKA (serine 470). The PDZ-binding motif lies at 523-525; sequence TDV.

The protein belongs to the potassium channel family. A (Shaker) (TC 1.A.1.2) subfamily. Kv1.3/KCNA3 sub-subfamily. As to quaternary structure, homotetramer. Forms heterooligomers with KCNE4 which inhibits KCNA3 activity by impairing localization to the cell membrane. The stoichiometry of KCNA3 and KCNE4 in the heterooligomers are 4:1, 4:2, 4:3 or 4:4 respectively. Increasing the number of KCNE4 subunits steadily slows the activation KCNA3 and decreases its abundance at the cell membrane. However, a single subunit of KCNE4 is sufficient for the cooperative enhancement of the inactivating function of the channel. Interacts with SEC24D; this interaction is reduced in the presence of KCNE4. Interacts with DLG1, DLG2 and DLG4 via their PDZ domains. Phosphorylation on Tyr-449 inhibits its channel activity. In terms of processing, N-glycosylation promotes the cell surface expression.

The protein localises to the cell membrane. The catalysed reaction is K(+)(in) = K(+)(out). With respect to regulation, activity is up-regulated by JAK2. Functionally, mediates the voltage-dependent potassium ion permeability of excitable membranes. Assuming opened or closed conformations in response to the voltage difference across the membrane, the protein forms a potassium-selective channel through which potassium ions may pass in accordance with their electrochemical gradient. The protein is Potassium voltage-gated channel subfamily A member 3 (Kcna3) of Rattus norvegicus (Rat).